The sequence spans 155 residues: MGLQGQLSDVSSDSIPLMLLSLLAVFINHLRSFLLRLTSKSNPNLPVDDVSIASGLANIIVLADQLSLNRLFSYRCGDGGGGGSDCVVCLSKLKEGEEVRKLECRHVFHKKCLEGWLHQFNFTCPLCRSALVSDDCVSKTQRSVGRDLISCFSLH.

The segment at 86–128 (CVVCLSKLKEGEEVRKLECRHVFHKKCLEGWLHQFNFTCPLCR) adopts an RING-type; atypical zinc-finger fold.

Interacts with NAC019 and NAC055. In terms of tissue distribution, expressed in stems, flowers, cauline leaves, rosettes, siliques, seeds and roots.

It localises to the cytoplasm. Its subcellular location is the nucleus. The enzyme catalyses S-ubiquitinyl-[E2 ubiquitin-conjugating enzyme]-L-cysteine + [acceptor protein]-L-lysine = [E2 ubiquitin-conjugating enzyme]-L-cysteine + N(6)-ubiquitinyl-[acceptor protein]-L-lysine.. It participates in protein modification; protein ubiquitination. In terms of biological role, E3 ubiquitin-protein ligase involved in the positive regulation of abscisic acid (ABA) signaling and responses to salt and osmotic stresses during seed germination and early seedling development. Acts additively with RHA2B in regulating ABA signaling and drought response. Possesses E3 ubiquitin ligase activity in vitro. This is E3 ubiquitin-protein ligase RHA2A from Arabidopsis thaliana (Mouse-ear cress).